A 146-amino-acid chain; its full sequence is MRAVLQRVTRATCTVEGTITGQTGPGLLILLGVAPTDTPEVACALAGKTAKLRIFNDEAGKMNRSVLDIGGGVLSISQFTLYADTRSGNRPSFIAAAPPDRARELYGAFNEALRAQGLEVSEGVFGAHMVLDLTNDGPVTITLDVP.

The Gly-cisPro motif, important for rejection of L-amino acids motif lies at 137-138; sequence GP.

This sequence belongs to the DTD family. As to quaternary structure, homodimer.

It localises to the cytoplasm. The enzyme catalyses glycyl-tRNA(Ala) + H2O = tRNA(Ala) + glycine + H(+). The catalysed reaction is a D-aminoacyl-tRNA + H2O = a tRNA + a D-alpha-amino acid + H(+). Functionally, an aminoacyl-tRNA editing enzyme that deacylates mischarged D-aminoacyl-tRNAs. Also deacylates mischarged glycyl-tRNA(Ala), protecting cells against glycine mischarging by AlaRS. Acts via tRNA-based rather than protein-based catalysis; rejects L-amino acids rather than detecting D-amino acids in the active site. By recycling D-aminoacyl-tRNA to D-amino acids and free tRNA molecules, this enzyme counteracts the toxicity associated with the formation of D-aminoacyl-tRNA entities in vivo and helps enforce protein L-homochirality. In Deinococcus deserti (strain DSM 17065 / CIP 109153 / LMG 22923 / VCD115), this protein is D-aminoacyl-tRNA deacylase.